We begin with the raw amino-acid sequence, 229 residues long: Multiple organellar RNA editing factor 5, chloroplastic/mitochondrial (229 aa).

The transit peptide at 1–57 (MAKTLARSTASRITKRLISTSGATTPSPSYILSRRSTPVFSHAVGFISSLNRFTTIR) directs the protein to the chloroplast and mitochondrion.

The protein belongs to the MORF family. In terms of assembly, homodimer and heterodimers with MORF8/RIP1, MORF3/RIP3, MORF6/RIP6, MORF7/RIP7 and MORF9/RIP9.

It localises to the mitochondrion. Its subcellular location is the plastid. The protein localises to the chloroplast. Its function is as follows. Involved in organellar RNA editing. Required for the processing of few RNA editing sites in mitochondria. The sequence is that of Multiple organellar RNA editing factor 5, chloroplastic/mitochondrial from Arabidopsis thaliana (Mouse-ear cress).